We begin with the raw amino-acid sequence, 220 residues long: Endonuclease NucS (220 aa).

Belongs to the NucS endonuclease family.

Its subcellular location is the cytoplasm. Cleaves both 3' and 5' ssDNA extremities of branched DNA structures. This Mycobacterium leprae (strain TN) protein is Endonuclease NucS.